Reading from the N-terminus, the 753-residue chain is Eukaryotic translation initiation factor 3 subunit B (753 aa).

Residues 42–129 form the RRM domain; sequence TMLVVDNIPI…NVLHVNRFGD (88 aa). WD repeat units lie at residues 142–185, 203–241, 321–362, 537–580, and 595–640; these read DLPS…WWNG, NSKW…GPIG, DTQS…LLDR, LDSK…DERR, and GEHY…LLHE. A coiled-coil region spans residues 723–753; sequence KSKAKIDVKGQEARVEEWVEELIDETEELSM.

This sequence belongs to the eIF-3 subunit B family. In terms of assembly, component of the eukaryotic translation initiation factor 3 (eIF-3) complex.

The protein localises to the cytoplasm. In terms of biological role, RNA-binding component of the eukaryotic translation initiation factor 3 (eIF-3) complex, which is involved in protein synthesis of a specialized repertoire of mRNAs and, together with other initiation factors, stimulates binding of mRNA and methionyl-tRNAi to the 40S ribosome. The eIF-3 complex specifically targets and initiates translation of a subset of mRNAs involved in cell proliferation. This is Eukaryotic translation initiation factor 3 subunit B from Cryptococcus neoformans var. neoformans serotype D (strain B-3501A) (Filobasidiella neoformans).